Reading from the N-terminus, the 410-residue chain is Phthiocerol/phthiodiolone dimycocerosyl transferase (410 aa).

Residue His-118 is the Proton acceptor of the active site.

The protein belongs to the acyltransferase PapA5 family. In terms of assembly, monomer. Interacts directly with the acyl carrier protein (ACP) domain of the mycocerosic acid synthase (mas) protein.

It carries out the reaction 2 a mycocerosyl-[mycocerosic acid synthase] + a phthiocerol = a dimycocerosyl phthiocerol + 2 holo-[mycocerosic acid synthase].. The enzyme catalyses 2 a mycocerosyl-[mycocerosic acid synthase] + a phthiodiolone = a dimycocerosyl phthiodiolone + 2 holo-[mycocerosic acid synthase].. It catalyses the reaction 2 a mycocerosyl-[mycocerosic acid synthase] + a phenolphthiocerol = a dimycocerosyl phenolphthiocerol + 2 holo-[mycocerosic acid synthase].. Catalyzes diesterification of phthiocerol, phthiodiolone, and phenolphthiocerol with mycocerosic acids, the final step in the phthiocerol, phthiodiolone and phenolphthiocerol dimycocerosate esters (PDIM) synthesis. Can directly transfer the mycocerosate bound to the mycocerosic acid synthase (mas) onto the substrate alcohols. This chain is Phthiocerol/phthiodiolone dimycocerosyl transferase (papA5), found in Mycobacterium sp. (strain JLS).